The following is a 235-amino-acid chain: NAD(P)H-quinone oxidoreductase subunit K (235 aa).

[4Fe-4S] cluster-binding residues include Cys-52, Cys-53, Cys-117, and Cys-148. Over residues 216-226 (AGAAVAPQLPV) the composition is skewed to low complexity. The segment at 216–235 (AGAAVAPQLPVTEKEGRDRA) is disordered.

This sequence belongs to the complex I 20 kDa subunit family. NDH-1 can be composed of about 15 different subunits; different subcomplexes with different compositions have been identified which probably have different functions. [4Fe-4S] cluster is required as a cofactor.

Its subcellular location is the cellular thylakoid membrane. It catalyses the reaction a plastoquinone + NADH + (n+1) H(+)(in) = a plastoquinol + NAD(+) + n H(+)(out). It carries out the reaction a plastoquinone + NADPH + (n+1) H(+)(in) = a plastoquinol + NADP(+) + n H(+)(out). In terms of biological role, NDH-1 shuttles electrons from an unknown electron donor, via FMN and iron-sulfur (Fe-S) centers, to quinones in the respiratory and/or the photosynthetic chain. The immediate electron acceptor for the enzyme in this species is believed to be plastoquinone. Couples the redox reaction to proton translocation, and thus conserves the redox energy in a proton gradient. Cyanobacterial NDH-1 also plays a role in inorganic carbon-concentration. The polypeptide is NAD(P)H-quinone oxidoreductase subunit K (Synechococcus elongatus (strain ATCC 33912 / PCC 7942 / FACHB-805) (Anacystis nidulans R2)).